A 545-amino-acid chain; its full sequence is MARGAGLVFFVGVWVVSCLAAAPRTSWKRVTSGEDVVLLPAPAERTRAHKLLWAAEPLDACGPLRPSWVALWPPRRVLETVVDAACMRAPEPLAIAYSPPFPAGDEGLYSELAWRDRVAVVNESLVIYGALETDSGLYTLSVVGLSDEARQVASVVLVVEPAPVPTPTPDDYDEEDDAGVTNARRSAFPPQPPPRRPPVAPPTHPRVIPEVSHVRGVTVHMETLEAILFAPGETFGTNVSIHAIAHDDGPYAMDVVWMRFDVPSSCADMRIYEACLYHPQLPECLSPADAPCAVSSWAYRLAVRSYAGCSRTTPPPRCFAEARMEPVPGLAWLASTVNLEFQHASPQHAGLYLCVVYVDDHIHAWGHMTISTAAQYRNAVVEQHLPQRQPEPVEPTRPHVRAPHPAPSARGPLRLGAVLGAALLLAALGLSAWACMTCWRRRSWRAVKSRASATGPTYIRVADSELYADWSSDSEGERDGSLWQDPPERPDSPSTNGSGFEILSPTAPSVYPHSEGRKSRRPLTTFGSGSPGRRHSQASYPSVLW.

An N-terminal signal peptide occupies residues 1–20 (MARGAGLVFFVGVWVVSCLA). Topologically, residues 21–414 (AAPRTSWKRV…PAPSARGPLR (394 aa)) are virion surface. The segment at 61–86 (CGPLRPSWVALWPPRRVLETVVDAAC) is interaction with gI. N-linked (GlcNAc...) asparagine; by host glycosylation is present at asparagine 122. The tract at residues 162-206 (APVPTPTPDDYDEEDDAGVTNARRSAFPPQPPPRRPPVAPPTHPR) is disordered. Tyrosine 172 bears the Sulfotyrosine; by host mark. Residues 179–188 (GVTNARRSAF) are compositionally biased toward low complexity. Over residues 189-204 (PPQPPPRRPPVAPPTH) the composition is skewed to pro residues. Residues 230–375 (APGETFGTNV…GHMTISTAAQ (146 aa)) form a fc-binding region. A glycan (N-linked (GlcNAc...) asparagine; by host) is linked at asparagine 238. 3 disulfide bridges follow: cysteine 266–cysteine 292, cysteine 275–cysteine 284, and cysteine 309–cysteine 318. The disordered stretch occupies residues 386-408 (PQRQPEPVEPTRPHVRAPHPAPS). Residues 415–435 (LGAVLGAALLLAALGLSAWAC) traverse the membrane as a helical segment. The Intravirion segment spans residues 436–545 (MTCWRRRSWR…SQASYPSVLW (110 aa)). Short sequence motifs (internalization motif) lie at residues 458 to 461 (YIRV) and 467 to 470 (YADW). The tract at residues 465 to 490 (ELYADWSSDSEGERDGSLWQDPPERP) is interaction with VP22 and UL11. The disordered stretch occupies residues 470–545 (WSSDSEGERD…SQASYPSVLW (76 aa)). 2 positions are modified to phosphoserine; by host CK2: serine 471 and serine 472. Residues 471–479 (SSDSEGERD) form an acidic region. Basic and acidic residues predominate over residues 475 to 491 (EGERDGSLWQDPPERPD). Residue serine 498 is modified to Phosphoserine.

This sequence belongs to the alphaherpesvirinae glycoprotein E family. Interacts with gI; this interaction enhances the Fc receptor function of gE. The heterodimer gE/gI interacts with the Fc part of host IgG. Interacts (via C-terminus) with VP22 tegument protein; this interaction is necessary for the recruitment of VP22 to the Golgi and its packaging into virions. Interacts (via C-terminus) with UL11 tegument protein. Post-translationally, phosphorylated on serines within the acidic cluster. Phosphorylation determines whether endocytosed viral gE traffics to the trans-Golgi network or recycles to the cell membrane. N-glycosylated, and sulfated.

Its subcellular location is the virion membrane. It is found in the host cell membrane. The protein resides in the host cell junction. The protein localises to the host Golgi apparatus membrane. It localises to the host endosome membrane. Functionally, in epithelial cells, the heterodimer gE/gI is required for the cell-to-cell spread of the virus, by sorting nascent virions to cell junctions. Once the virus reaches the cell junctions, virus particles can spread to adjacent cells extremely rapidly through interactions with cellular receptors that accumulate at these junctions. Implicated in basolateral spread in polarized cells. In neuronal cells, gE/gI is essential for the anterograde spread of the infection throughout the host nervous system. Together with US9, the heterodimer gE/gI is involved in the sorting and transport of viral structural components toward axon tips. Its function is as follows. The heterodimer gE/gI serves as a receptor for the Fc part of host IgG. Dissociation of gE/gI from IgG occurs at acidic pH. May thus be involved in anti-HSV antibodies bipolar bridging, followed by intracellular endocytosis and degradation, thereby interfering with host IgG-mediated immune responses. The polypeptide is Envelope glycoprotein E (gE) (Human herpesvirus 2 (strain HG52) (HHV-2)).